Here is a 156-residue protein sequence, read N- to C-terminus: ATP synthase subunit b (156 aa).

Residues 7–27 (LFAQIIVFFGLVWFTMKFVWP) form a helical membrane-spanning segment.

Belongs to the ATPase B chain family. As to quaternary structure, F-type ATPases have 2 components, F(1) - the catalytic core - and F(0) - the membrane proton channel. F(1) has five subunits: alpha(3), beta(3), gamma(1), delta(1), epsilon(1). F(0) has three main subunits: a(1), b(2) and c(10-14). The alpha and beta chains form an alternating ring which encloses part of the gamma chain. F(1) is attached to F(0) by a central stalk formed by the gamma and epsilon chains, while a peripheral stalk is formed by the delta and b chains.

It is found in the cell inner membrane. Its function is as follows. F(1)F(0) ATP synthase produces ATP from ADP in the presence of a proton or sodium gradient. F-type ATPases consist of two structural domains, F(1) containing the extramembraneous catalytic core and F(0) containing the membrane proton channel, linked together by a central stalk and a peripheral stalk. During catalysis, ATP synthesis in the catalytic domain of F(1) is coupled via a rotary mechanism of the central stalk subunits to proton translocation. In terms of biological role, component of the F(0) channel, it forms part of the peripheral stalk, linking F(1) to F(0). The chain is ATP synthase subunit b from Neisseria meningitidis serogroup C (strain 053442).